We begin with the raw amino-acid sequence, 456 residues long: tRNA-2-methylthio-N(6)-dimethylallyladenosine synthase (456 aa).

The MTTase N-terminal domain maps to 9–126 (KKLYIKTHGC…LPEMMETKKS (118 aa)). Positions 18, 55, 89, 163, 167, and 170 each coordinate [4Fe-4S] cluster. Residues 149-381 (DADGVSAFVS…QDRITQQAMA (233 aa)) form the Radical SAM core domain. In terms of domain architecture, TRAM spans 384 to 448 (RRMVGNTERI…PNSLRGSLIA (65 aa)).

It belongs to the methylthiotransferase family. MiaB subfamily. In terms of assembly, monomer. [4Fe-4S] cluster serves as cofactor.

It is found in the cytoplasm. The catalysed reaction is N(6)-dimethylallyladenosine(37) in tRNA + (sulfur carrier)-SH + AH2 + 2 S-adenosyl-L-methionine = 2-methylsulfanyl-N(6)-dimethylallyladenosine(37) in tRNA + (sulfur carrier)-H + 5'-deoxyadenosine + L-methionine + A + S-adenosyl-L-homocysteine + 2 H(+). Catalyzes the methylthiolation of N6-(dimethylallyl)adenosine (i(6)A), leading to the formation of 2-methylthio-N6-(dimethylallyl)adenosine (ms(2)i(6)A) at position 37 in tRNAs that read codons beginning with uridine. This is tRNA-2-methylthio-N(6)-dimethylallyladenosine synthase from Cellvibrio japonicus (strain Ueda107) (Pseudomonas fluorescens subsp. cellulosa).